Consider the following 233-residue polypeptide: Biosynthetic peptidoglycan transglycosylase (233 aa).

A helical transmembrane segment spans residues 4–24; the sequence is LAYLAGCLIVGVVAMQVYFFL.

Belongs to the glycosyltransferase 51 family.

Its subcellular location is the cell inner membrane. It catalyses the reaction [GlcNAc-(1-&gt;4)-Mur2Ac(oyl-L-Ala-gamma-D-Glu-L-Lys-D-Ala-D-Ala)](n)-di-trans,octa-cis-undecaprenyl diphosphate + beta-D-GlcNAc-(1-&gt;4)-Mur2Ac(oyl-L-Ala-gamma-D-Glu-L-Lys-D-Ala-D-Ala)-di-trans,octa-cis-undecaprenyl diphosphate = [GlcNAc-(1-&gt;4)-Mur2Ac(oyl-L-Ala-gamma-D-Glu-L-Lys-D-Ala-D-Ala)](n+1)-di-trans,octa-cis-undecaprenyl diphosphate + di-trans,octa-cis-undecaprenyl diphosphate + H(+). It functions in the pathway cell wall biogenesis; peptidoglycan biosynthesis. Peptidoglycan polymerase that catalyzes glycan chain elongation from lipid-linked precursors. The sequence is that of Biosynthetic peptidoglycan transglycosylase from Cupriavidus metallidurans (strain ATCC 43123 / DSM 2839 / NBRC 102507 / CH34) (Ralstonia metallidurans).